Here is a 79-residue protein sequence, read N- to C-terminus: Acyl carrier protein (79 aa).

A Carrier domain is found at 3–78 (QEILEKVRSI…DAVSYIQEKK (76 aa)). Residue S38 is modified to O-(pantetheine 4'-phosphoryl)serine.

It belongs to the acyl carrier protein (ACP) family. 4'-phosphopantetheine is transferred from CoA to a specific serine of apo-ACP by AcpS. This modification is essential for activity because fatty acids are bound in thioester linkage to the sulfhydryl of the prosthetic group.

The protein localises to the cytoplasm. The protein operates within lipid metabolism; fatty acid biosynthesis. In terms of biological role, carrier of the growing fatty acid chain in fatty acid biosynthesis. This chain is Acyl carrier protein, found in Synechococcus sp. (strain RCC307).